We begin with the raw amino-acid sequence, 473 residues long: H(+)/Cl(-) exchange transporter ClcA (473 aa).

Residues 1–32 lie on the Cytoplasmic side of the membrane; the sequence is MKTDTPSLETPQAARLRRRQLIRQLLERDKTP. A helical transmembrane segment spans residues 33–69; the sequence is LAILFMAAVVGTLVGLAAVAFDKGVAWLQNQRMEALV. Residues 70–76 are Periplasmic-facing; sequence HTADNYP. Residues 77-100 traverse the membrane as a helical segment; it reads LLLTVAFLCSAVLAMFGYFLVRKY. A Selectivity filter part_1 motif is present at residues 106 to 110; that stretch reads GSGIP. Chloride is bound at residue serine 107. The helical intramembrane region spans 109 to 116; sequence IPEIEGAL. Residues 117 to 123 are Cytoplasmic-facing; sequence EDQRPVR. 2 helical membrane-spanning segments follow: residues 124–141 and 148–166; these read WWRV…TLGG and EGPT…LDIF. Residues 146–150 carry the Selectivity filter part_2 motif; the sequence is GREGP. At 167 to 176 the chain is on the cytoplasmic side; that stretch reads RLKGDEARHT. 2 consecutive intramembrane regions (helical) follow at residues 177 to 189 and 193 to 201; these read LLAT…LAAA and PLAGILFII. At 202 to 214 the chain is on the cytoplasmic side; the sequence is EEMRPQFRYTLIS. A helical membrane pass occupies residues 215–232; it reads IKAVFIGVIMSTIMYRIF. The Periplasmic portion of the chain corresponds to 233–252; that stretch reads NHEVALIDVGKLSDAPLNTL. A helical membrane pass occupies residues 253-281; that stretch reads WLYLILGIIFGIFGPIFNKWVLGMQDLLH. Topologically, residues 282–287 are cytoplasmic; the sequence is RVHGGN. Residues 288 to 309 form a helical membrane-spanning segment; the sequence is ITKWVLMGGAIGGLCGLLGFVA. The Periplasmic segment spans residues 310-329; it reads PATSGGGFNLIPIATAGNFS. Transmembrane regions (helical) follow at residues 330–349 and 355–376; these read MGML…LCFS and GIFA…MVVV. Residues 355-359 carry the Selectivity filter part_3 motif; sequence GIFAP. Residues isoleucine 356 and phenylalanine 357 each coordinate chloride. The Periplasmic segment spans residues 377-386; it reads ELFPQYHLEA. An intramembrane region (helical) is located at residues 387 to 401; sequence GTFAIAGMGALLAAS. Positions 402–404 form an intramembrane region, note=Loop between two helices; the sequence is IRA. The segment at residues 405–416 is an intramembrane region (helical); sequence PLTGIILVLEMT. An intramembrane region (note=Loop between two helices) is located at residues 417-421; that stretch reads DNYQL. Residues 422–438 traverse the membrane as a helical segment; that stretch reads ILPMIITGLGATLLAQF. At 439–473 the chain is on the cytoplasmic side; that stretch reads TGGKPLYSEILARTLAKQEAEQLARSKAASASENT. Position 445 (tyrosine 445) interacts with chloride.

This sequence belongs to the chloride channel (TC 2.A.49) family. ClcA subfamily. In terms of assembly, homodimer.

The protein resides in the cell inner membrane. The enzyme catalyses 2 chloride(in) + H(+)(out) = 2 chloride(out) + H(+)(in). Its function is as follows. Proton-coupled chloride transporter. Functions as antiport system and exchanges two chloride ions for 1 proton. Probably acts as an electrical shunt for an outwardly-directed proton pump that is linked to amino acid decarboxylation, as part of the extreme acid resistance (XAR) response. The sequence is that of H(+)/Cl(-) exchange transporter ClcA from Shigella boydii serotype 4 (strain Sb227).